A 327-amino-acid polypeptide reads, in one-letter code: Dolichyl-phosphate beta-glucosyltransferase (327 aa).

At 1–15 (MIDLFINIASFTIYG) the chain is on the lumenal side. A helical transmembrane segment spans residues 16–36 (IPVIPLFIIVFVILSYYLLLL). The Cytoplasmic portion of the chain corresponds to 37-327 (HDESPLWLEK…YLLGIWKIKS (291 aa)).

This sequence belongs to the glycosyltransferase 2 family.

The protein localises to the endoplasmic reticulum membrane. It carries out the reaction a di-trans,poly-cis-dolichyl phosphate + UDP-alpha-D-glucose = a di-trans,poly-cis-dolichyl beta-D-glucosyl phosphate + UDP. Its pathway is protein modification; protein glycosylation. Its function is as follows. Endoplasmic reticulum membrane-bound UDP-glucose:dolichyl-phosphate glucosyltransferase involved in protein N-linked glycosylation. The sequence is that of Dolichyl-phosphate beta-glucosyltransferase (alg5) from Dictyostelium discoideum (Social amoeba).